Reading from the N-terminus, the 120-residue chain is UPF0102 protein COXBURSA331_A1934 (120 aa).

Belongs to the UPF0102 family.

This Coxiella burnetii (strain RSA 331 / Henzerling II) protein is UPF0102 protein COXBURSA331_A1934.